The chain runs to 506 residues: bZIP transcription factor TGA10 (506 aa).

Disordered stretches follow at residues valine 22–histidine 50 and proline 113–arginine 218. Composition is skewed to polar residues over residues methionine 25–glycine 45, proline 113–glycine 124, proline 142–leucine 152, and serine 160–proline 180. Over residues aspartate 207–threonine 216 the composition is skewed to basic and acidic residues. One can recognise a bZIP domain in the interval aspartate 213–arginine 257. Positions lysine 215–lysine 235 are basic motif. Positions leucine 217–arginine 224 match the Nuclear localization signal motif. Residues leucine 241–leucine 255 are leucine-zipper. In terms of domain architecture, DOG1 spans alanine 288–arginine 502.

It belongs to the bZIP family. As to quaternary structure, binds DNA as a dimer. Interacts with TGA2.2. In terms of tissue distribution, specifically expressed in roots.

It is found in the nucleus. Its function is as follows. Transcription activator that binds to as1-like elements (5'-TGACGTAAgggaTGACGCA-3') in promoters of target genes. Regulates transcription in response to plant signaling molecules salicylic acid (SA), methyl jasmonate (MJ) and auxin (2,4D) only in leaves. Prevents lateral branching and may repress defense signaling. The chain is bZIP transcription factor TGA10 from Nicotiana tabacum (Common tobacco).